The sequence spans 235 residues: Small ribosomal subunit protein uS2 (235 aa).

The protein belongs to the universal ribosomal protein uS2 family.

The polypeptide is Small ribosomal subunit protein uS2 (Caldanaerobacter subterraneus subsp. tengcongensis (strain DSM 15242 / JCM 11007 / NBRC 100824 / MB4) (Thermoanaerobacter tengcongensis)).